We begin with the raw amino-acid sequence, 422 residues long: E3 ubiquitin-protein ligase IE2 (422 aa).

The span at 1–10 (MSRQINAVTP) shows a compositional bias: polar residues. 2 disordered regions span residues 1–86 (MSRQ…VQII) and 165–215 (SPRS…EGEE). The segment covering 14–26 (SRRHRLSLSRRRI) has biased composition (basic residues). Positions 36–63 (PSSSSRSQPSSSSRSQPYSSSRSQPYSS) are enriched in low complexity. Residues 71–80 (ERSQEQRVSE) show a composition bias toward basic and acidic residues. The segment covering 179–196 (DVLSQSPDLFDSPQSPQQ) has biased composition (polar residues). Acidic residues predominate over residues 200-215 (ELEDEDEEEEEEEGEE). The RING-type; degenerate zinc-finger motif lies at 220–268 (CNICFTTLKDTKNVDSSFVTSIDCNHAVCFKCYVRIIMDNSTYKCFCSA). Residues 314–414 (IDLNDVERLE…RRNSELVAEL (101 aa)) adopt a coiled-coil conformation.

This sequence belongs to the alphabaculovirus IE2 protein family. As to quaternary structure, homooligomer. Post-translationally, auto-ubiquitinated.

The protein localises to the host nucleus. It carries out the reaction S-ubiquitinyl-[E2 ubiquitin-conjugating enzyme]-L-cysteine + [acceptor protein]-L-lysine = [E2 ubiquitin-conjugating enzyme]-L-cysteine + N(6)-ubiquitinyl-[acceptor protein]-L-lysine.. Functionally, RING-finger E3 ubiquitin ligase that plays an important regulatory role during the initial stages of infection. Migrates to specific nuclear foci early in infection supposely to prepare the sites for viral replication by targeting and ubiquitinating host proteins. The polypeptide is E3 ubiquitin-protein ligase IE2 (IE2) (Bombyx mori nuclear polyhedrosis virus (BmNPV)).